We begin with the raw amino-acid sequence, 84 residues long: Cell division topological specificity factor (84 aa).

This sequence belongs to the MinE family.

Its function is as follows. Prevents the cell division inhibition by proteins MinC and MinD at internal division sites while permitting inhibition at polar sites. This ensures cell division at the proper site by restricting the formation of a division septum at the midpoint of the long axis of the cell. In Rhodopseudomonas palustris (strain BisA53), this protein is Cell division topological specificity factor.